We begin with the raw amino-acid sequence, 230 residues long: Sugar fermentation stimulation protein homolog (230 aa).

Belongs to the SfsA family.

The sequence is that of Sugar fermentation stimulation protein homolog from Clostridium perfringens (strain ATCC 13124 / DSM 756 / JCM 1290 / NCIMB 6125 / NCTC 8237 / Type A).